The chain runs to 634 residues: Chaperone protein HtpG (634 aa).

The interval 1–345 (MEHQQNHTFS…SNDLPLNVSR (345 aa)) is a; substrate-binding. The tract at residues 346–562 (EILQDTRVTA…NDDMSTQMAK (217 aa)) is b. A c region spans residues 563 to 634 (LMAQMGQPVP…VGRINKLLLA (72 aa)).

The protein belongs to the heat shock protein 90 family. As to quaternary structure, homodimer.

It localises to the cytoplasm. Its function is as follows. Molecular chaperone. Has ATPase activity. This Psychromonas ingrahamii (strain DSM 17664 / CCUG 51855 / 37) protein is Chaperone protein HtpG.